A 312-amino-acid polypeptide reads, in one-letter code: DNA-directed RNA polymerase subunit alpha (312 aa).

Residues 1–226 (MIEFEKPIIT…EHLNLFTDLT (226 aa)) form an alpha N-terminal domain (alpha-NTD) region. The interval 243 to 312 (DEKVLDRTIE…DLGLGLKNDK (70 aa)) is alpha C-terminal domain (alpha-CTD).

This sequence belongs to the RNA polymerase alpha chain family. As to quaternary structure, homodimer. The RNAP catalytic core consists of 2 alpha, 1 beta, 1 beta' and 1 omega subunit. When a sigma factor is associated with the core the holoenzyme is formed, which can initiate transcription.

It catalyses the reaction RNA(n) + a ribonucleoside 5'-triphosphate = RNA(n+1) + diphosphate. DNA-dependent RNA polymerase catalyzes the transcription of DNA into RNA using the four ribonucleoside triphosphates as substrates. This is DNA-directed RNA polymerase subunit alpha from Streptococcus mutans serotype c (strain ATCC 700610 / UA159).